The chain runs to 362 residues: Atypical chemokine receptor 3 (362 aa).

Residues 1 to 40 (MDLHLFDYSEPGNFSDISWPCNSSDCIVVDTVMCPNMPNK) lie on the Extracellular side of the membrane. N13, N22, and N39 each carry an N-linked (GlcNAc...) asparagine glycan. The chain crosses the membrane as a helical span at residues 41 to 61 (SVLLYTLSFIYIFIFVIGMIA). Residues 62–81 (NSVVVWVNIQAKTTGYDTHC) lie on the Cytoplasmic side of the membrane. A helical membrane pass occupies residues 82-102 (YILNLAIADLWVVLTIPVWVV). The Extracellular segment spans residues 103-118 (SLVQHNQWPMGELTCK). Residues C117 and C196 are joined by a disulfide bond. The helical transmembrane segment at 119–139 (VTHLIFSINLFGSIFFLTCMS) threads the bilayer. The Cytoplasmic portion of the chain corresponds to 140–162 (VDRYLSITYFTNTPSSRKKMVRR). Residues 163-183 (VVCILVWLLAFCVSLPDTYYL) traverse the membrane as a helical segment. Residues 184–213 (KTVTSASNNETYCRSFYPEHSIKEWLIGME) lie on the Extracellular side of the membrane. Residues 214 to 234 (LVSVVLGFAVPFSIIAVFYFL) traverse the membrane as a helical segment. The Cytoplasmic portion of the chain corresponds to 235-252 (LARAISASSDQEKHSSRK). A helical membrane pass occupies residues 253-273 (IIFSYVVVFLVCWLPYHVAVL). Residues 274-296 (LDIFSILHYIPFTCRLEHALFTA) lie on the Extracellular side of the membrane. A helical transmembrane segment spans residues 297–319 (LHVTQCLSLVHCCVNPVLYSFIN). Topologically, residues 320-362 (RNYRYELMKAFIFKYSAKTGLTKLIDASRVSETEYSALEQSTK) are cytoplasmic. The tract at residues 324–362 (YELMKAFIFKYSAKTGLTKLIDASRVSETEYSALEQSTK) is C-terminal cytoplasmic tail. Phosphoserine is present on residues S347, S350, and S355.

Belongs to the G-protein coupled receptor 1 family. Atypical chemokine receptor subfamily. As to quaternary structure, homodimer. Can form heterodimers with CXCR4; heterodimerization may regulate CXCR4 signaling activity. Interacts with ARRB1 and ARRB2. In terms of processing, the Ser/Thr residues in the C-terminal cytoplasmic tail may be phosphorylated. Post-translationally, ubiquitinated at the Lys residues in its C-terminal cytoplasmic tail and is essential for correct trafficking from and to the cell membrane. Deubiquitinated by CXCL12-stimulation in a reversible manner. Expressed in monocytes, basophils, B-cells, umbilical vein endothelial cells (HUVEC) and B-lymphoblastoid cells. Lower expression detected in CD4+ T-lymphocytes and natural killer cells. In the brain, detected in endothelial cells and capillaries, and in mature neurons of the frontal cortex and hippocampus. Expressed in tubular formation in the kidney. Highly expressed in astroglial tumor endothelial, microglial and glioma cells. Expressed at low levels in normal CD34+ progenitor cells, but at very high levels in several myeloid malignant cell lines. Expressed in breast carcinomas but not in normal breast tissue (at protein level).

It localises to the cell membrane. The protein localises to the early endosome. It is found in the recycling endosome. In terms of biological role, atypical chemokine receptor that controls chemokine levels and localization via high-affinity chemokine binding that is uncoupled from classic ligand-driven signal transduction cascades, resulting instead in chemokine sequestration, degradation, or transcytosis. Also known as interceptor (internalizing receptor) or chemokine-scavenging receptor or chemokine decoy receptor. Acts as a receptor for chemokines CXCL11 and CXCL12/SDF1. Chemokine binding does not activate G-protein-mediated signal transduction but instead induces beta-arrestin recruitment, leading to ligand internalization and activation of MAPK signaling pathway. Required for regulation of CXCR4 protein levels in migrating interneurons, thereby adapting their chemokine responsiveness. In glioma cells, transduces signals via MEK/ERK pathway, mediating resistance to apoptosis. Promotes cell growth and survival. Not involved in cell migration, adhesion or proliferation of normal hematopoietic progenitors but activated by CXCL11 in malignant hemapoietic cells, leading to phosphorylation of ERK1/2 (MAPK3/MAPK1) and enhanced cell adhesion and migration. Plays a regulatory role in CXCR4-mediated activation of cell surface integrins by CXCL12. Required for heart valve development. Regulates axon guidance in the oculomotor system through the regulation of CXCL12 levels. Functionally, (Microbial infection) Acts as a coreceptor with CXCR4 for a restricted number of HIV isolates. In Homo sapiens (Human), this protein is Atypical chemokine receptor 3.